A 739-amino-acid polypeptide reads, in one-letter code: MEHTYQYAWVIPLLPLPVIMSMGFGLFFIPTATKNLRRIWAFPSVLLLSIAMVFSVQLSIQQINGSSIYQYLWSWTVNNDFSLEFGYLIDPLTSIMLILITTVGILVLIYSDGYMSHDEGYLRFFVYISFFNTSMLGLVTSSNLIQIYFFWELVGMCSYLLIGFWFTRPLAASACQKAFVTNRVGDFGLLLGILGFFWITGSLEFRDLFKIANNWIPNNGINSLLTTLCAFLLFLGAVAKSAQFPLHVWLPDAMEGPTPISALIHAATMVAAGIFLLARLLPLFISLPLIMSLISLVGTITLFLGATLALAQRDIKRSLAYSTMSQLGYMMLALGIGSYQAALFHLITHAYSKALLFLGSGSIIHSMEPLVGYSPDKSQNMVLMGGLRKYIPITRSTFLWGTLSLCGIPPLACFWSKDEILSNSWLYSPFFGIIASFTAGLTAFYMFRIYLLTFDGYLRVHFQNYSSTKEGPLYSISLWGKRIPKGVNGDFVLSTTKSGVSFFSQNIPKMQGNTTNRIGCFSTSFGAKKTFAYPHETGNTMLFPLLILLLFTFFIGFIGISFDNGATDNGIAGLTILSKWLTPSINFTQESSNSSINSYEFITNAISSVSLAIFGLFIAYIFYGSAYSFFQNLDLQNSFYKESPKKAFFGKVKKKIYSWSYNRGYIDIFYTRVFTLGIRGLTELTEFFDKGVIDGITNGVGLVSFCIGEEIKYVGGGRISSYLFFFLCYVSIFLFFFLF.

A run of 16 helical transmembrane segments spans residues 9–29 (WVIPLLPLPVIMSMGFGLFFI), 39–59 (IWAFPSVLLLSIAMVFSVQLS), 89–109 (IDPLTSIMLILITTVGILVLI), 125–145 (FVYISFFNTSMLGLVTSSNLI), 147–167 (IYFFWELVGMCSYLLIGFWFT), 185–205 (GDFGLLLGILGFFWITGSLEF), 219–239 (NGINSLLTTLCAFLLFLGAVA), 258–278 (TPISALIHAATMVAAGIFLLA), 280–300 (LLPLFISLPLIMSLISLVGTI), 327–347 (LGYMMLALGIGSYQAALFHLI), 354–374 (ALLFLGSGSIIHSMEPLVGYS), 396–416 (STFLWGTLSLCGIPPLACFWS), 425–445 (WLYSPFFGIIASFTAGLTAFY), 542–562 (LFPLLILLLFTFFIGFIGISF), 610–630 (SLAIFGLFIAYIFYGSAYSFF), and 719–739 (ISSYLFFFLCYVSIFLFFFLF).

The protein belongs to the complex I subunit 5 family. NDH is composed of at least 16 different subunits, 5 of which are encoded in the nucleus.

The protein resides in the plastid. Its subcellular location is the chloroplast thylakoid membrane. It catalyses the reaction a plastoquinone + NADH + (n+1) H(+)(in) = a plastoquinol + NAD(+) + n H(+)(out). It carries out the reaction a plastoquinone + NADPH + (n+1) H(+)(in) = a plastoquinol + NADP(+) + n H(+)(out). In terms of biological role, NDH shuttles electrons from NAD(P)H:plastoquinone, via FMN and iron-sulfur (Fe-S) centers, to quinones in the photosynthetic chain and possibly in a chloroplast respiratory chain. The immediate electron acceptor for the enzyme in this species is believed to be plastoquinone. Couples the redox reaction to proton translocation, and thus conserves the redox energy in a proton gradient. This is NAD(P)H-quinone oxidoreductase subunit 5, chloroplastic (ndhF) from Agrostis stolonifera (Creeping bentgrass).